Here is a 298-residue protein sequence, read N- to C-terminus: Protoheme IX farnesyltransferase (298 aa).

9 helical membrane passes run 16–36, 45–65, 93–113, 114–134, 141–161, 172–192, 223–243, 244–264, and 277–297; these read VVAL…PDMP, ALGF…NQLL, VFAG…VNVI, TAVL…VYLK, IVIG…AVTG, SLLV…LAIF, VLLA…VFYL, GGAV…LNPP, and IVYL…LPWV.

This sequence belongs to the UbiA prenyltransferase family. Protoheme IX farnesyltransferase subfamily.

It localises to the cell inner membrane. It carries out the reaction heme b + (2E,6E)-farnesyl diphosphate + H2O = Fe(II)-heme o + diphosphate. The protein operates within porphyrin-containing compound metabolism; heme O biosynthesis; heme O from protoheme: step 1/1. Its function is as follows. Converts heme B (protoheme IX) to heme O by substitution of the vinyl group on carbon 2 of heme B porphyrin ring with a hydroxyethyl farnesyl side group. The sequence is that of Protoheme IX farnesyltransferase from Xanthomonas oryzae pv. oryzae (strain MAFF 311018).